A 149-amino-acid chain; its full sequence is NPC intracellular cholesterol transporter 2 (149 aa).

Residues 1-19 form the signal peptide; the sequence is MRFLAATILLLALVAASQA. Disulfide bonds link cysteine 27-cysteine 140, cysteine 42-cysteine 47, and cysteine 93-cysteine 99. 2 N-linked (GlcNAc...) asparagine glycosylation sites follow: asparagine 58 and asparagine 69. Position 116 is an N6-acetyllysine (lysine 116).

This sequence belongs to the NPC2 family. As to quaternary structure, interacts with NPC1 (via the second lumenal domain) in a cholestrol-dependent manner. Interacts with NUS1/NgBR, the interaction stabilizes NCP2 and regulates cholesterol trafficking. Interacts with DHDDS. Interacts with NEDD4L (via C2 domain). Interacts with NPC1L1. Post-translationally, N-glycosylated. As to expression, detected in liver and bile. Detected in epididymis (at protein level). Detected in caput epididymis, corpus epididymis, cauda epididymis and ovary.

The protein localises to the secreted. It is found in the endoplasmic reticulum. The protein resides in the lysosome. It catalyses the reaction cholesterol(in) = cholesterol(out). Intracellular cholesterol transporter which acts in concert with NPC1 and plays an important role in the egress of cholesterol from the lysosomal compartment. Unesterified cholesterol that has been released from LDLs in the lumen of the late endosomes/lysosomes is transferred by NPC2 to the cholesterol-binding pocket in the N-terminal domain of NPC1. May bind and mobilize cholesterol that is associated with membranes. NPC2 binds cholesterol with a 1:1 stoichiometry. Can bind a variety of sterols, including lathosterol, desmosterol and the plant sterols stigmasterol and beta-sitosterol. The secreted form of NCP2 regulates biliary cholesterol secretion via stimulation of ABCG5/ABCG8-mediated cholesterol transport. The polypeptide is NPC intracellular cholesterol transporter 2 (Mus musculus (Mouse)).